The chain runs to 69 residues: uncharacterized protein (69 aa).

An N-terminal signal peptide occupies residues 1-18 (MAMLWISMFIIMRKYGRS). A disordered region spans residues 17–69 (RSSSSSSSSSSSSSSSSSSSSSSSSSSSSSSSSSSSSSSSSGSSSNSNRVVVV). Over residues 18–61 (SSSSSSSSSSSSSSSSSSSSSSSSSSSSSSSSSSSSSSSSGSSS) the composition is skewed to low complexity.

It is found in the secreted. This is an uncharacterized protein from Dictyostelium discoideum (Social amoeba).